The primary structure comprises 167 residues: Acetolactate synthase small subunit (167 aa).

The ACT domain occupies 7–81; the sequence is TLSVLVEAKP…NVIKIVELED (75 aa).

The protein belongs to the acetolactate synthase small subunit family. Dimer of large and small chains.

It catalyses the reaction 2 pyruvate + H(+) = (2S)-2-acetolactate + CO2. The protein operates within amino-acid biosynthesis; L-isoleucine biosynthesis; L-isoleucine from 2-oxobutanoate: step 1/4. Its pathway is amino-acid biosynthesis; L-valine biosynthesis; L-valine from pyruvate: step 1/4. In Mycobacterium avium, this protein is Acetolactate synthase small subunit (ilvH).